Here is a 216-residue protein sequence, read N- to C-terminus: Urease accessory protein UreG (216 aa).

GTP is bound at residue 25 to 32 (GPVGSGKT).

This sequence belongs to the SIMIBI class G3E GTPase family. UreG subfamily. As to quaternary structure, homodimer. UreD, UreF and UreG form a complex that acts as a GTP-hydrolysis-dependent molecular chaperone, activating the urease apoprotein by helping to assemble the nickel containing metallocenter of UreC. The UreE protein probably delivers the nickel.

Its subcellular location is the cytoplasm. Facilitates the functional incorporation of the urease nickel metallocenter. This process requires GTP hydrolysis, probably effectuated by UreG. The sequence is that of Urease accessory protein UreG from Burkholderia thailandensis (strain ATCC 700388 / DSM 13276 / CCUG 48851 / CIP 106301 / E264).